We begin with the raw amino-acid sequence, 240 residues long: Lectin (240 aa).

Mn(2+) contacts are provided by Glu127 and Asp129. Residues Asp129, Tyr131, Asn133, and Asp138 each coordinate Ca(2+). Residues Asp138 and His143 each contribute to the Mn(2+) site.

It belongs to the leguminous lectin family. In terms of assembly, heterotetramer of two alpha and two beta chains; disulfide bond linked.

Functionally, binds preferentially to oligosaccharides bearing the sequence Man-alpha-1-&gt;2 Man-alpha-1-&gt;6 Man-alpha-1-&gt;6Man found in early steps of glycoprotein processing in the endoplasmic reticulum. It binds weakly to highly processed oligosaccharide structures. The polypeptide is Lectin (Leucomphalos mildbraedii (Bowringia mildbraedii)).